Here is a 191-residue protein sequence, read N- to C-terminus: Thymidine kinase (191 aa).

ATP-binding positions include 9–16 and 85–88; these read GSMNSGKT and DESQ. Glutamate 86 functions as the Proton acceptor in the catalytic mechanism. Positions 143, 146, 181, and 184 each coordinate Zn(2+).

This sequence belongs to the thymidine kinase family. Homotetramer.

It localises to the cytoplasm. The catalysed reaction is thymidine + ATP = dTMP + ADP + H(+). The protein is Thymidine kinase of Listeria monocytogenes serovar 1/2a (strain ATCC BAA-679 / EGD-e).